The chain runs to 325 residues: uncharacterized protein (325 aa).

The interval 296–325 (QRTLSSSMEEADRPRRMSVTQPHLPPVPSA) is disordered.

This sequence belongs to the NDRG family.

This is an uncharacterized protein from Caenorhabditis elegans.